A 398-amino-acid chain; its full sequence is Immunoglobulin heavy constant alpha 1 (398 aa).

Residues 1-364 (ASPTSPKVFP…TPGANLWPTT (364 aa)) lie on the Extracellular side of the membrane. One can recognise an Ig-like 1 domain in the interval 6 to 98 (PKVFPLSLCS…HYTNPSQDVT (93 aa)). Intrachain disulfides connect Cys26–Cys85 and Cys77–Cys101. The segment at 96-122 (DVTVPCPVPSTPPTPSPSTPPTPSPSC) is disordered. A compositionally biased stretch (pro residues) spans 101–119 (CPVPSTPPTPSPSTPPTPS). O-linked (GalNAc...) serine glycosylation is present at Ser105. O-linked (GalNAc...) threonine glycans are attached at residues Thr106 and Thr109. 2 O-linked (GalNAc...) serine glycosylation sites follow: Ser111 and Ser113. 2 O-linked (GalNAc...) threonine glycosylation sites follow: Thr114 and Thr117. Ser119 and Ser121 each carry an O-linked (GalNAc...) serine glycan. Cystine bridges form between Cys123–Cys180, Cys147–Cys204, and Cys250–Cys313. 2 consecutive Ig-like domains span residues 125–220 (PRLS…ATLS) and 228–330 (PEVH…KTID). N-linked (GlcNAc...) (complex) asparagine glycosylation occurs at Asn144. N-linked (GlcNAc...) (complex) asparagine glycosylation occurs at Pro340. 3-hydroxy-L-kynurenine is bound at residue Glu352. The chain crosses the membrane as a helical span at residues 365-383 (ITFLTLFLLSLFYSTALTV). The Cytoplasmic portion of the chain corresponds to 384–398 (TSVRGPSGNREGPQY).

As to quaternary structure, immunoglobulins are composed of two identical heavy chains and two identical light chains; disulfide-linked. Monomeric or polymeric. Part of the secretory IgA (sIgA) complex that consists of two, four or five IgA monomers, and two additional non-Ig polypeptides, namely the JCHAIN and the secretory component (the proteolytic product of PIGR). 3-Hydroxykynurenine, an oxidized tryptophan metabolite that is common in biological fluids, reacts with alpha-1-microglobulin to form heterogeneous polycyclic chromophores including hydroxanthommatin. The chromophore reacts with accessible cysteines forming non-reducible thioether cross-links with Ig alpha-1 chain C region Cys-352. In terms of processing, N- and O-glycosylated. N-glycan at Asn-144: Hex5HexNAc4.

Its subcellular location is the secreted. It localises to the cell membrane. Its function is as follows. Constant region of immunoglobulin heavy chains. Immunoglobulins, also known as antibodies, are membrane-bound or secreted glycoproteins produced by B lymphocytes. In the recognition phase of humoral immunity, the membrane-bound immunoglobulins serve as receptors which, upon binding of a specific antigen, trigger the clonal expansion and differentiation of B lymphocytes into immunoglobulins-secreting plasma cells. Secreted immunoglobulins mediate the effector phase of humoral immunity, which results in the elimination of bound antigens. The antigen binding site is formed by the variable domain of one heavy chain, together with that of its associated light chain. Thus, each immunoglobulin has two antigen binding sites with remarkable affinity for a particular antigen. The variable domains are assembled by a process called V-(D)-J rearrangement and can then be subjected to somatic hypermutations which, after exposure to antigen and selection, allow affinity maturation for a particular antigen. Ig alpha is the major immunoglobulin class in body secretions. The sequence is that of Immunoglobulin heavy constant alpha 1 from Homo sapiens (Human).